A 1310-amino-acid polypeptide reads, in one-letter code: MAQLWLSCFLLPALVVSVAANVAPKFLANMTSVILPEDLPVGAQAFWLVAEDQDNDPLTYGMSGPNAYFFAVTPKTGEVKLASALDYETLYTFKVTISVSDPYIQVQREMLVIVEDRNDNAPVFQNTAFSTSINETLPVGSVVFSVLAVDKDMGSAGMVVYSIEKVIPSTGDSEHLFRILANGSIVLNGSLSYNNKSAFYQLELKACDLGGMYHNTFTIQCSLPVFLSISVVDQPDLDPQFVREFYSASVAEDAAKGTSVLTVEAVDGDKGINDPVIYSISYSTRPGWFDIGADGVIRVNGSLDREQLLEADEEVQLQVTATETHLNIYGQEAKVSIWVTVRVMDVNDHKPEFYNCSLPACTFTPEEAQVNFTGYVDEHASPRIPIDDLTMVVYDPDKGSNGTFLLSLGGPDAEAFSVSPERAVGSASVQVLVRVSALVDYERQTAMAVQVVATDSVSQNFSVAMVTIHLRDINDHRPTFPQSLYVLTVPEHSATGSVVTDSIHATDPDTGAWGQITYSLLPGNGADLFQVDPVSGTVTVRNGELLDRESQAVYYLTLQATDGGNLSSSTTLQIHLLDINDNAPVVSGSYNIFVQEEEGNVSVTIQAHDNDEPGTNNSRLLFNLLPGPYSHNFSLDPDTGLLRNLGPLDREAIDPALEGRIVLTVLVSDCGEPVLGTKVNVTITVEDINDNLPIFNQSSYNFTVKEEDPGVLVGVVKAWDADQTEANNRISFSLSGSGANYFMIRGLVLGAGWAEGYLRLPPDVSLDYETQPVFNLTVSAENPDPQGGETIVDVCVNVKDVNDNPPTLDVASLRGIRVAENGSQHGQVAVVVASDVDTSAQLEIQLVNILCTKAGVDVGSLCWGWFSVAANGSVYINQSKAIDYEACDLVTLVVRACDLATDPGFQAYSNNGSLLITIEDVNDNAPYFLPENKTFVIIPELVLPNREVASVRARDDDSGNNGVILFSILRVDFISKDGATIPFQGVFSIFTSSEADVFAGSIQPVTSLDSTLQGTYQVTVQARDRPSLGPFLEATTTLNLFTVDQSYRSRLQFSTPKEEVGANRQAINAALTQATRTTVYIVDIQDIDSAARARPHSYLDAYFVFPNGSALTLDELSVMIRNDQDSLTQLLQLGLVVLGSQESQESDLSKQLISVIIGLGVALLLVLVIMTMAFVCVRKSYNRKLQAMKAAKEARKTAAGVMPSAPAIPGTNMYNTERANPMLNLPNKDLGLEYLSPSNDLDSVSVNSLDDNSVDVDKNSQEIKEHRPPHTPPEPDPEPLSVVLLGRQAGASGQLEGPSYTNAGLDTTDL.

The signal sequence occupies residues 1–20 (MAQLWLSCFLLPALVVSVAA). Residues 21–1154 (NVAPKFLANM…ESDLSKQLIS (1134 aa)) lie on the Extracellular side of the membrane. 3 Cadherin domains span residues 27–124 (LANM…APVF), 125–241 (QNTA…DPQF), and 242–353 (VREF…KPEF). Asparagine 29, asparagine 134, asparagine 182, asparagine 188, asparagine 195, asparagine 300, asparagine 355, asparagine 371, asparagine 401, asparagine 460, asparagine 565, asparagine 600, asparagine 616, asparagine 632, asparagine 680, asparagine 696, asparagine 701, asparagine 775, asparagine 821, asparagine 871, asparagine 877, asparagine 911, asparagine 932, and asparagine 1107 each carry an N-linked (GlcNAc...) asparagine glycan. Cadherin domains lie at 368–480 (AQVN…RPTF), 481–586 (PQSL…APVV), 586–695 (VSGS…LPIF), 696–808 (NQSS…PPTL), 810–928 (VASL…APYF), and 930–1058 (PENK…TPKE). Residues 1155-1175 (VIIGLGVALLLVLVIMTMAFV) traverse the membrane as a helical segment. Residues 1176 to 1310 (CVRKSYNRKL…TNAGLDTTDL (135 aa)) lie on the Cytoplasmic side of the membrane. Positions 1180–1310 (SYNRKLQAMK…TNAGLDTTDL (131 aa)) are mediates interaction with USH1C and MYO7B and is required for proper localization to microvilli tips and function in microvilli organization. A Phosphoserine modification is found at serine 1248. Residues 1259-1268 (NSQEIKEHRP) show a composition bias toward basic and acidic residues. Residues 1259 to 1310 (NSQEIKEHRPPHTPPEPDPEPLSVVLLGRQAGASGQLEGPSYTNAGLDTTDL) are disordered. Serine 1299 carries the post-translational modification Phosphoserine. The span at 1299 to 1310 (SYTNAGLDTTDL) shows a compositional bias: polar residues.

Part of the IMAC/intermicrovillar adhesion complex/intermicrovillar tip-link complex composed of ANKS4B, MYO7B, USH1C, CDHR2 and CDHR5. Interacts with MAST2. Interacts (via cytoplasmic domain) with USH1C and MYO7B; required for proper localization of CDHR2 to microvilli tips and its function in brush border differentiation. As to expression, highly expressed in liver, kidney and colon. Moderately expressed in small intestine. Down-regulated in a number of liver and colon cancers. Expressed in duodenum with higher expression in enterocytes along the villus axis and lower expression in crypts (at protein level).

Its subcellular location is the apical cell membrane. It localises to the cell projection. The protein localises to the microvillus membrane. The protein resides in the cell junction. Intermicrovillar adhesion molecule that forms, via its extracellular domain, calcium-dependent heterophilic complexes with CDHR5 on adjacent microvilli. Thereby, controls the packing of microvilli at the apical membrane of epithelial cells. Through its cytoplasmic domain, interacts with microvillus cytoplasmic proteins to form the intermicrovillar adhesion complex/IMAC. This complex plays a central role in microvilli and epithelial brush border differentiation. May also play a role in cell-cell adhesion and contact inhibition in epithelial cells. This is Cadherin-related family member 2 from Homo sapiens (Human).